Here is a 192-residue protein sequence, read N- to C-terminus: 7-methyl-GTP pyrophosphatase (192 aa).

The Proton acceptor role is filled by aspartate 69.

The protein belongs to the Maf family. YceF subfamily. It depends on a divalent metal cation as a cofactor.

It is found in the cytoplasm. The enzyme catalyses N(7)-methyl-GTP + H2O = N(7)-methyl-GMP + diphosphate + H(+). Functionally, nucleoside triphosphate pyrophosphatase that hydrolyzes 7-methyl-GTP (m(7)GTP). May have a dual role in cell division arrest and in preventing the incorporation of modified nucleotides into cellular nucleic acids. This chain is 7-methyl-GTP pyrophosphatase, found in Pseudomonas syringae pv. syringae (strain B728a).